A 624-amino-acid polypeptide reads, in one-letter code: Bifunctional 3'-phosphoadenosine 5'-phosphosulfate synthase 1 (624 aa).

The residue at position 1 (M1) is an N-acetylmethionine. The adenylyl-sulfate kinase stretch occupies residues 1 to 225 (MELPGSLCKK…VVELLQERDI (225 aa)). An N6-acetyllysine modification is found at K12. Position 62–67 (62–67 (GAGKTT)) interacts with ATP. Residues 89-92 (DNIR), F101, 106-109 (REEN), 132-133 (IS), K171, and 184-185 (GF) contribute to the adenosine 5'-phosphosulfate site. ATP is bound by residues C207, C212, 419-422 (QLRN), 521-525 (GRDPA), and A563. The sulfate adenylyltransferase stretch occupies residues 234–624 (VKELYVPENK…AEYYKALEKA (391 aa)).

This sequence in the N-terminal section; belongs to the APS kinase family. In the C-terminal section; belongs to the sulfate adenylyltransferase family. In terms of assembly, homodimer.

The catalysed reaction is sulfate + ATP + H(+) = adenosine 5'-phosphosulfate + diphosphate. It catalyses the reaction adenosine 5'-phosphosulfate + ATP = 3'-phosphoadenylyl sulfate + ADP + H(+). It functions in the pathway sulfur metabolism; sulfate assimilation. In terms of biological role, bifunctional enzyme with both ATP sulfurylase and APS kinase activity, which mediates two steps in the sulfate activation pathway. The first step is the transfer of a sulfate group to ATP to yield adenosine 5'-phosphosulfate (APS), and the second step is the transfer of a phosphate group from ATP to APS yielding 3'-phosphoadenylylsulfate (PAPS: activated sulfate donor used by sulfotransferase). In mammals, PAPS is the sole source of sulfate; APS appears to be only an intermediate in the sulfate-activation pathway. Required for normal biosynthesis of sulfated L-selectin ligands in endothelial cells. This Cavia porcellus (Guinea pig) protein is Bifunctional 3'-phosphoadenosine 5'-phosphosulfate synthase 1 (PAPSS1).